The sequence spans 353 residues: C-C chemokine receptor type 8 (353 aa).

Topologically, residues 1 to 33 (MDYTMEPNVTMTDYYPDFFTAPCDAEFLLRGSM) are extracellular. The N-linked (GlcNAc...) asparagine glycan is linked to Asn8. A helical membrane pass occupies residues 34-61 (LYLAILYCVLFVLGLLGNSLVILVLVGC). Residues 62 to 71 (KKLRSITDIY) lie on the Cytoplasmic side of the membrane. The helical transmembrane segment at 72-91 (LLNLAASDLLFVLSIPFQTH) threads the bilayer. Residues 92–105 (NLLDQWVFGTAMCK) lie on the Extracellular side of the membrane. Cys104 and Cys181 are oxidised to a cystine. The chain crosses the membrane as a helical span at residues 106-127 (VVSGLYYIGFFSSMFFITLMSV). The Cytoplasmic segment spans residues 128–144 (DRYLAIVHAVYAIKVRT). Residues 145-169 (ASVGTALSLTVWLAAVTATIPLMVF) traverse the membrane as a helical segment. The Extracellular segment spans residues 170–200 (YQVASEDGMLQCFQFYEEQSLRWKLFTHFEI). The helical transmembrane segment at 201–220 (NALGLLLPFAILLFCYVRIL) threads the bilayer. The Cytoplasmic portion of the chain corresponds to 221–236 (QQLRGCLNHNRTRAIK). The chain crosses the membrane as a helical span at residues 237–261 (LVLTVVIVSLLFWVPFNVALFLTSL). Residues 262 to 278 (HDLHILDGCATRQRLAL) are Extracellular-facing. A helical membrane pass occupies residues 279 to 302 (AIHVTEVISFTHCCVNPVIYAFIG). Residues 303–353 (EKFKKHLMDVFQKSCSHIFLYLGRQMPVGALERQLSSNQRSSHSSTLDDIL) lie on the Cytoplasmic side of the membrane.

This sequence belongs to the G-protein coupled receptor 1 family. Expressed in thymus.

The protein resides in the cell membrane. Its function is as follows. Receptor for the CCL1/SCY1/TCA-3 chemokine. The chain is C-C chemokine receptor type 8 (Ccr8) from Mus musculus (Mouse).